Here is a 188-residue protein sequence, read N- to C-terminus: UPF0301 protein Cag_1601 (188 aa).

Belongs to the UPF0301 (AlgH) family.

This is UPF0301 protein Cag_1601 from Chlorobium chlorochromatii (strain CaD3).